Reading from the N-terminus, the 115-residue chain is MNIIDQLEQEQLRLDMPDFRAGDAIKVHVKIREGEKERIQIFAGVVIKKTKGLACARFTVRKISGGIGVERIFPLNSPSIDKIEVVTRGRVRRSKIYYLRNLRGKAARIKERRMA.

It belongs to the bacterial ribosomal protein bL19 family.

Its function is as follows. This protein is located at the 30S-50S ribosomal subunit interface and may play a role in the structure and function of the aminoacyl-tRNA binding site. The polypeptide is Large ribosomal subunit protein bL19 (Desulforapulum autotrophicum (strain ATCC 43914 / DSM 3382 / VKM B-1955 / HRM2) (Desulfobacterium autotrophicum)).